The following is a 151-amino-acid chain: Ribosome maturation factor RimP (151 aa).

Belongs to the RimP family.

The protein localises to the cytoplasm. Functionally, required for maturation of 30S ribosomal subunits. The chain is Ribosome maturation factor RimP from Pasteurella multocida (strain Pm70).